The primary structure comprises 449 residues: Ribulose bisphosphate carboxylase large chain (449 aa).

Lys-5 is modified (N6,N6,N6-trimethyllysine). Asn-114 and Thr-164 together coordinate substrate. Lys-166 serves as the catalytic Proton acceptor. Lys-168 lines the substrate pocket. Residues Lys-192, Asp-194, and Glu-195 each coordinate Mg(2+). Position 192 is an N6-carboxylysine (Lys-192). His-285 functions as the Proton acceptor in the catalytic mechanism. Positions 286, 318, and 370 each coordinate substrate.

Belongs to the RuBisCO large chain family. Type I subfamily. In terms of assembly, heterohexadecamer of 8 large chains and 8 small chains; disulfide-linked. The disulfide link is formed within the large subunit homodimers. Requires Mg(2+) as cofactor. In terms of processing, the disulfide bond which can form in the large chain dimeric partners within the hexadecamer appears to be associated with oxidative stress and protein turnover.

It is found in the plastid. The protein localises to the chloroplast. It carries out the reaction 2 (2R)-3-phosphoglycerate + 2 H(+) = D-ribulose 1,5-bisphosphate + CO2 + H2O. The enzyme catalyses D-ribulose 1,5-bisphosphate + O2 = 2-phosphoglycolate + (2R)-3-phosphoglycerate + 2 H(+). Functionally, ruBisCO catalyzes two reactions: the carboxylation of D-ribulose 1,5-bisphosphate, the primary event in carbon dioxide fixation, as well as the oxidative fragmentation of the pentose substrate in the photorespiration process. Both reactions occur simultaneously and in competition at the same active site. This Zamioculcas zamiifolia (Aroid palm) protein is Ribulose bisphosphate carboxylase large chain.